Consider the following 390-residue polypeptide: Flagellar P-ring protein (390 aa).

The N-terminal stretch at 1–25 (MLLKKIFLTGIIVLDLVFFVSYGFA) is a signal peptide.

The protein belongs to the FlgI family. The basal body constitutes a major portion of the flagellar organelle and consists of four rings (L,P,S, and M) mounted on a central rod.

The protein resides in the periplasm. The protein localises to the bacterial flagellum basal body. In terms of biological role, assembles around the rod to form the L-ring and probably protects the motor/basal body from shearing forces during rotation. The chain is Flagellar P-ring protein from Syntrophus aciditrophicus (strain SB).